Reading from the N-terminus, the 614-residue chain is V-type proton ATPase catalytic subunit A (614 aa).

Residue Gly247 to Thr254 participates in ATP binding.

This sequence belongs to the ATPase alpha/beta chains family. As to quaternary structure, V-ATPase is a heteromultimeric enzyme made up of two complexes: the ATP-hydrolytic V1 complex and the proton translocation V0 complex. The V1 complex consists of three catalytic AB heterodimers that form a heterohexamer, three peripheral stalks each consisting of EG heterodimers, one central rotor including subunits D and F, and the regulatory subunits C and H. The proton translocation complex V0 consists of the proton transport subunit a, a ring of proteolipid subunits c9c'', rotary subunit d, subunits e and f, and the accessory subunits VhaAC45 and ATP6AP2.

The catalysed reaction is ATP + H2O + 4 H(+)(in) = ADP + phosphate + 5 H(+)(out). With respect to regulation, ATP hydrolysis occurs at the interface between the nucleotide-binding domains of subunits A and B. ATP hydrolysis triggers a conformational change in the subunits D and F, which induces a shift of subunit d. The c-ring is subsequently rotated and results in a continuous proton translocation across the membrane. Functionally, catalytic subunit of the V1 complex of vacuolar(H+)-ATPase (V-ATPase), a multisubunit enzyme composed of a peripheral complex (V1) that hydrolyzes ATP and a membrane integral complex (V0) that translocates protons. V-ATPase is responsible for acidifying and maintaining the pH of intracellular compartments and in some cell types, is targeted to the plasma membrane, where it is responsible for acidifying the extracellular environment. The protein is V-type proton ATPase catalytic subunit A of Anopheles gambiae (African malaria mosquito).